Consider the following 865-residue polypeptide: NBPF family member NBPF11 (865 aa).

The stretch at M70–L130 forms a coiled coil. The tract at residues K161–P200 is disordered. Residues E165–K181 show a composition bias toward acidic residues. One can recognise an Olduvai 1 domain in the interval E165 to P259. The segment covering E190–P200 has biased composition (basic and acidic residues). Residues K339–L401 adopt a coiled-coil conformation. Olduvai domains follow at residues E436–P528, E529–P617, S620–D675, E676–P767, and S770–C865. Disordered stretches follow at residues A450–L475 and W520–T567. Composition is skewed to acidic residues over residues N530–E539 and E550–D562. A disordered region spans residues R829–C865. Residues R833 to K850 show a composition bias toward basic and acidic residues.

The protein belongs to the NBPF family. As to expression, expressed in spinal cord.

It is found in the cytoplasm. The chain is NBPF family member NBPF11 from Homo sapiens (Human).